Reading from the N-terminus, the 325-residue chain is MRILGIETSCDETGVAIYDEDKGLVANQLYSQIDMHADYGGVVPELASRDHIRKTLPLIQEALKEANLQPSDIDGIAYTAGPGLVGALLVGSTIARSLAYAWNVPALGVHHMEGHLLAPMLEENAPEFPFVALLISGGHTQLVKVDGVGQYELLGESIDDAAGEAFDKTGKLLGLDYPAGVAMSKLAESGTPNRFKFPRPMTDRPGLDFSFSGLKTFAANTIKANLNENGELDEQTKCDIAHAFQQAVVDTILIKCKRALEQTGYKRLVMAGGVSANKQLRADLAEMMKKLKGEVFYPRPQFCTDNGAMIAYTGFLRLKTMNKPT.

Fe cation is bound by residues H111 and H115. Substrate-binding positions include 134-138 (LISGG), D167, G180, and N277. D305 serves as a coordination point for Fe cation.

It belongs to the KAE1 / TsaD family. It depends on Fe(2+) as a cofactor.

Its subcellular location is the cytoplasm. The protein resides in the secreted. It carries out the reaction L-threonylcarbamoyladenylate + adenosine(37) in tRNA = N(6)-L-threonylcarbamoyladenosine(37) in tRNA + AMP + H(+). In terms of biological role, required for the formation of a threonylcarbamoyl group on adenosine at position 37 (t(6)A37) in tRNAs that read codons beginning with adenine. Is involved in the transfer of the threonylcarbamoyl moiety of threonylcarbamoyl-AMP (TC-AMP) to the N6 group of A37, together with TsaE and TsaB. TsaD likely plays a direct catalytic role in this reaction. This chain is tRNA N6-adenosine threonylcarbamoyltransferase, found in Mannheimia haemolytica (Pasteurella haemolytica).